The sequence spans 216 residues: uncharacterized protein (216 aa).

A disordered region spans residues 55-216 (NEDKAEAMSN…NEKEKDVNPK (162 aa)). 3 stretches are compositionally biased toward basic and acidic residues: residues 134–152 (LTEKPLTDTEPELHPDNHV), 177–187 (KINDKSDDTLH), and 207–216 (NEKEKDVNPK).

This is an uncharacterized protein from Caenorhabditis elegans.